Here is a 436-residue protein sequence, read N- to C-terminus: Capsid protein (436 aa).

The disordered stretch occupies residues 326–370; it reads RDYSQRGTVPTAPSRQQVESEARAPYPKTNRPPTTADILPGDLDS. Positions 330-344 are enriched in polar residues; that stretch reads QRGTVPTAPSRQQVE.

Belongs to the anelloviridae capsid protein family.

It is found in the virion. Its function is as follows. Self-assembles to form an icosahedral capsid with a T=1 symmetry, about 30 nm in diameter, and consisting of 60 capsid proteins. The capsid encapsulates the genomic DNA. Capsid protein is involved in attachment and entry into the host cell. This chain is Capsid protein, found in Torque teno felis virus (isolate Fc-TTV4).